A 134-amino-acid polypeptide reads, in one-letter code: Small ribosomal subunit protein uS11 (134 aa).

The tract at residues 114–134 (TPVPHNGTRPPRKWFKRQEKR) is disordered. Over residues 123–134 (PPRKWFKRQEKR) the composition is skewed to basic residues.

This sequence belongs to the universal ribosomal protein uS11 family. In terms of assembly, part of the 30S ribosomal subunit. Interacts with proteins S7 and S18. Binds to IF-3.

In terms of biological role, located on the platform of the 30S subunit, it bridges several disparate RNA helices of the 16S rRNA. Forms part of the Shine-Dalgarno cleft in the 70S ribosome. The sequence is that of Small ribosomal subunit protein uS11 from Mesomycoplasma hyopneumoniae (strain J / ATCC 25934 / NCTC 10110) (Mycoplasma hyopneumoniae).